The following is an 819-amino-acid chain: Leucine--tRNA ligase (819 aa).

The short motif at 42-52 (PYPSGRLHMGH) is the 'HIGH' region element. The 'KMSKS' region signature appears at 577 to 581 (KMSKS). Lys580 lines the ATP pocket.

Belongs to the class-I aminoacyl-tRNA synthetase family.

Its subcellular location is the cytoplasm. The enzyme catalyses tRNA(Leu) + L-leucine + ATP = L-leucyl-tRNA(Leu) + AMP + diphosphate. This chain is Leucine--tRNA ligase, found in Saccharophagus degradans (strain 2-40 / ATCC 43961 / DSM 17024).